Reading from the N-terminus, the 138-residue chain is 10 kDa chaperonin 1, chloroplastic (138 aa).

Residues Met1–Arg61 constitute a chloroplast transit peptide. Residues Lys50–Val137 are cpn-10 domain.

This sequence belongs to the GroES chaperonin family. As to expression, expressed at low levels in germinating seeds, seedlings, rosettes leaves, flowers and siliques.

Its subcellular location is the plastid. It is found in the chloroplast. Functionally, functions as a co-chaperone for protein folding in chloroplasts. The polypeptide is 10 kDa chaperonin 1, chloroplastic (Arabidopsis thaliana (Mouse-ear cress)).